The primary structure comprises 197 residues: Suppressor of RNA silencing p3 (197 aa).

The protein belongs to the tenuiviruses p3 protein family. In terms of assembly, homodimer.

The protein localises to the host cytoplasm. Functionally, acts as a suppressor of RNA-mediated gene silencing, also known as post-transcriptional gene silencing (PTGS), presumably through the binding of dsRNA. The sequence is that of Suppressor of RNA silencing p3 from Rottboellia (Sorghum).